The following is a 171-amino-acid chain: Galectin-related protein (171 aa).

The Galectin domain occupies 38–170; that stretch reads PFCGHIKGGM…INGDLQLTKL (133 aa).

Does not bind lactose, and may not bind carbohydrates. The sequence is that of Galectin-related protein (lgalsl) from Xenopus tropicalis (Western clawed frog).